We begin with the raw amino-acid sequence, 163 residues long: NADH-quinone oxidoreductase subunit I (163 aa).

2 4Fe-4S ferredoxin-type domains span residues 53-83 (LRRY…IEAG) and 94-123 (VRYD…EGPN). 8 residues coordinate [4Fe-4S] cluster: cysteine 63, cysteine 66, cysteine 69, cysteine 73, cysteine 103, cysteine 106, cysteine 109, and cysteine 113.

This sequence belongs to the complex I 23 kDa subunit family. As to quaternary structure, NDH-1 is composed of 14 different subunits. Subunits NuoA, H, J, K, L, M, N constitute the membrane sector of the complex. [4Fe-4S] cluster is required as a cofactor.

It localises to the cell inner membrane. The catalysed reaction is a quinone + NADH + 5 H(+)(in) = a quinol + NAD(+) + 4 H(+)(out). NDH-1 shuttles electrons from NADH, via FMN and iron-sulfur (Fe-S) centers, to quinones in the respiratory chain. The immediate electron acceptor for the enzyme in this species is believed to be ubiquinone. Couples the redox reaction to proton translocation (for every two electrons transferred, four hydrogen ions are translocated across the cytoplasmic membrane), and thus conserves the redox energy in a proton gradient. The sequence is that of NADH-quinone oxidoreductase subunit I from Allorhizobium ampelinum (strain ATCC BAA-846 / DSM 112012 / S4) (Agrobacterium vitis (strain S4)).